The following is a 458-amino-acid chain: RuvB-like helicase 1 (458 aa).

71-78 (GGPGTGKT) contributes to the ATP binding site.

It belongs to the RuvB family. In terms of assembly, may form heterododecamers with RVB2. Component of the SWR1 chromatin remodeling complex, the INO80 chromatin remodeling complex, and of the R2TP complex.

It is found in the nucleus. The catalysed reaction is ATP + H2O = ADP + phosphate + H(+). Its function is as follows. DNA helicase which participates in several chromatin remodeling complexes, including the SWR1 and the INO80 complexes. The SWR1 complex mediates the ATP-dependent exchange of histone H2A for the H2A variant HZT1 leading to transcriptional regulation of selected genes by chromatin remodeling. The INO80 complex remodels chromatin by shifting nucleosomes and is involved in DNA repair. Also involved in pre-rRNA processing. In Gibberella zeae (strain ATCC MYA-4620 / CBS 123657 / FGSC 9075 / NRRL 31084 / PH-1) (Wheat head blight fungus), this protein is RuvB-like helicase 1 (RVB1).